Here is a 235-residue protein sequence, read N- to C-terminus: uncharacterized protein (235 aa).

Disordered stretches follow at residues 20-64 (IHPN…LPIK) and 140-164 (SQFFNNNNNNNNNNNNSNNNKNFDQ). Low complexity-rich tracts occupy residues 30 to 60 (NNNNNINNNNNNNNNNNNNNNNNNNNNSNNN) and 140 to 161 (SQFFNNNNNNNNNNNNSNNNKN). Residues 174–213 (KYMEFLSDIEQLNSDLKESKDNLESISIEMVLLETRLKGL) are a coiled coil.

This is an uncharacterized protein from Dictyostelium discoideum (Social amoeba).